A 192-amino-acid chain; its full sequence is Thiamine transporter ThiT (192 aa).

Transmembrane regions (helical) follow at residues 10-30 (LIEI…SGMF), 31-51 (LSMP…LISF), 57-77 (AGLT…NLFA), 81-101 (VQLL…GCFA), 123-143 (AVFI…AVFF), and 164-184 (YMVP…MTAP).

This sequence belongs to the vitamin uptake transporter (VUT/ECF) (TC 2.A.88) family. Thiamine transporter subfamily. Forms a stable energy-coupling factor (ECF) transporter complex composed of a membrane-embedded substrate-binding protein (S component), two ATP-binding proteins (A components) and a transmembrane protein (T component).

It is found in the cell membrane. Functionally, probably a thiamine-binding protein that interacts with the energy-coupling factor (ECF) ABC-transporter complex. Unlike classic ABC transporters this ECF transporter provides the energy necessary to transport a number of different substrates. The substrates themselves are bound by transmembrane, not extracytoplasmic soluble proteins. The polypeptide is Thiamine transporter ThiT (thiT) (Bacillus subtilis (strain 168)).